The chain runs to 538 residues: Sensor protein CitS (538 aa).

Residues 1-13 (MKRRLFPLTFSAK) lie on the Cytoplasmic side of the membrane. Residues 14 to 34 (MMGFIALLIIAMFVLLGVFLN) form a helical membrane-spanning segment. Over 35–174 (EQYARTLEEQ…DIQQVIGERL (140 aa)) the chain is Extracellular. Residues 175-195 (IAMWQIVVVIMILGLMGTWLV) traverse the membrane as a helical segment. The Cytoplasmic segment spans residues 196–538 (ANTVKKATLG…TIPKHEAKEG (343 aa)). Residues 216 to 282 (QQKEAILQSI…PEVLQVGKGQ (67 aa)) form the PAS domain. The Histidine kinase domain maps to 339–534 (AQTHEFSNKL…CFVLTIPKHE (196 aa)). Residue His342 is modified to Phosphohistidine; by autocatalysis.

It localises to the cell membrane. The enzyme catalyses ATP + protein L-histidine = ADP + protein N-phospho-L-histidine.. Its function is as follows. Member of the two-component regulatory system CitT/CitS. Functions probably as a membrane-associated protein kinase that phosphorylates CitT in response to environmental citrate or Mg(2+)-citrate complex. This is Sensor protein CitS (citS) from Halalkalibacterium halodurans (strain ATCC BAA-125 / DSM 18197 / FERM 7344 / JCM 9153 / C-125) (Bacillus halodurans).